A 496-amino-acid chain; its full sequence is MVKEVVLGIDLGTSAIKIIAVDQLGNVIESVSETLKLYQEHPGYSEQDPNEWFEATKKGIKELIQSTEMSDKIVKGISFSGQMHGLVIVDDNGIPLRKAILWNDTRNSIQCRQIEDIYGERLNYNPILEGFTLPKMLWVQQHEPEIWNRVDVFMLPKDYLRYCLTQTIHMEYSDACSTLLFNPENYEWTKDVGDTFNIGDIYPPLVKSHSYVGNVTSSLAKELGLSSDVAVYAGGGDNACGAIGAGVIHDKSALCSIGTSGVVLNVEYQRVTSYDSNLHLFNHSVPDTYYAMGVTLAAGYSLNWLKQTFFENESFEEILNLAASSKIGANGLLFTPYLAGERTPHGDAQIRGSFIGISGQHTKADFARAVIEGITYSLYDSIKIMRRAGHEMNSITSIGGGAKSRFWLQLQADIFNVQIKRLKHEEGPSMGAAILAAYGLGWFKTIESCVEAFIKVDEVFEPNNENHDLYEQYYSVYEAIYKQTKQLTADLLTITN.

83 to 84 (MH) contacts substrate. Asp-237 serves as the catalytic Proton acceptor.

Belongs to the FGGY kinase family.

It carries out the reaction D-xylulose + ATP = D-xylulose 5-phosphate + ADP + H(+). Its function is as follows. Catalyzes the phosphorylation of D-xylulose to D-xylulose 5-phosphate. The sequence is that of Xylulose kinase from Staphylococcus epidermidis (strain ATCC 12228 / FDA PCI 1200).